Consider the following 210-residue polypeptide: Guanylate kinase (210 aa).

The 179-residue stretch at 6–184 folds into the Guanylate kinase-like domain; the sequence is GTLYIISAPS…ALQDLKCIIQ (179 aa). Residue 13-20 participates in ATP binding; that stretch reads APSGAGKT.

Belongs to the guanylate kinase family.

It localises to the cytoplasm. It carries out the reaction GMP + ATP = GDP + ADP. Essential for recycling GMP and indirectly, cGMP. The polypeptide is Guanylate kinase (Nitrosospira multiformis (strain ATCC 25196 / NCIMB 11849 / C 71)).